A 306-amino-acid polypeptide reads, in one-letter code: tRNA dimethylallyltransferase (306 aa).

An ATP-binding site is contributed by 12–19 (GPTGTKKS).

It belongs to the IPP transferase family. Monomer. Mg(2+) is required as a cofactor.

The catalysed reaction is adenosine(37) in tRNA + dimethylallyl diphosphate = N(6)-dimethylallyladenosine(37) in tRNA + diphosphate. Functionally, catalyzes the transfer of a dimethylallyl group onto the adenine at position 37 in tRNAs that read codons beginning with uridine, leading to the formation of N6-(dimethylallyl)adenosine (i(6)A). The chain is tRNA dimethylallyltransferase from Mycoplasmoides gallisepticum (strain R(low / passage 15 / clone 2)) (Mycoplasma gallisepticum).